The primary structure comprises 184 residues: Ribosome maturation factor RimM (184 aa).

Residues 93–165 (DEGWYEHELV…YILITPPSGL (73 aa)) form the PRC barrel domain.

This sequence belongs to the RimM family. In terms of assembly, binds ribosomal protein uS19.

Its subcellular location is the cytoplasm. In terms of biological role, an accessory protein needed during the final step in the assembly of 30S ribosomal subunit, possibly for assembly of the head region. Essential for efficient processing of 16S rRNA. May be needed both before and after RbfA during the maturation of 16S rRNA. It has affinity for free ribosomal 30S subunits but not for 70S ribosomes. In Paenarthrobacter aurescens (strain TC1), this protein is Ribosome maturation factor RimM.